The following is a 499-amino-acid chain: Probable dipeptidase B (499 aa).

Cys-26 is a catalytic residue.

It belongs to the peptidase C69 family.

The enzyme catalyses an L-aminoacyl-L-amino acid + H2O = 2 an L-alpha-amino acid. The chain is Probable dipeptidase B (pepDB) from Streptococcus pyogenes serotype M3 (strain ATCC BAA-595 / MGAS315).